A 331-amino-acid polypeptide reads, in one-letter code: Very-long-chain 3-oxoacyl-CoA reductase (331 aa).

The helical transmembrane segment at Val-15–Leu-35 threads the bilayer. 8 residues coordinate NADP(+): Val-60, Asp-115, Asp-123, Asn-142, Tyr-209, Lys-213, Ile-242, and Ser-244. The active-site Proton donor is Tyr-209. Lys-213 (lowers pKa of active site Tyr) is an active-site residue.

This sequence belongs to the short-chain dehydrogenases/reductases (SDR) family.

The protein resides in the endoplasmic reticulum membrane. It catalyses the reaction a very-long-chain (3R)-3-hydroxyacyl-CoA + NADP(+) = a very-long-chain 3-oxoacyl-CoA + NADPH + H(+). The protein operates within lipid metabolism; fatty acid biosynthesis. Functionally, component of the microsomal membrane bound fatty acid elongation system, which produces the 26-carbon very long-chain fatty acids (VLCFA) from palmitate. Catalyzes the reduction of the 3-ketoacyl-CoA intermediate that is formed in each cycle of fatty acid elongation. VLCFAs serve as precursors for ceramide and sphingolipids. The polypeptide is Very-long-chain 3-oxoacyl-CoA reductase (Pyricularia oryzae (strain 70-15 / ATCC MYA-4617 / FGSC 8958) (Rice blast fungus)).